Consider the following 89-residue polypeptide: UPF0237 protein DIP1286 (89 aa).

Positions 4–78 constitute an ACT domain; that stretch reads IISVTGADHT…KDQNLVIRIQ (75 aa).

It belongs to the UPF0237 family.

The polypeptide is UPF0237 protein DIP1286 (Corynebacterium diphtheriae (strain ATCC 700971 / NCTC 13129 / Biotype gravis)).